Reading from the N-terminus, the 274-residue chain is Large ribosomal subunit protein uL2 (274 aa).

The disordered stretch occupies residues 224-256; that stretch reads VMNPVDHPHGGGEGKTGEGRHPVDPWGNLTKGY. Basic and acidic residues predominate over residues 229 to 246; that stretch reads DHPHGGGEGKTGEGRHPV.

Belongs to the universal ribosomal protein uL2 family. In terms of assembly, part of the 50S ribosomal subunit. Forms a bridge to the 30S subunit in the 70S ribosome.

Its function is as follows. One of the primary rRNA binding proteins. Required for association of the 30S and 50S subunits to form the 70S ribosome, for tRNA binding and peptide bond formation. It has been suggested to have peptidyltransferase activity; this is somewhat controversial. Makes several contacts with the 16S rRNA in the 70S ribosome. The polypeptide is Large ribosomal subunit protein uL2 (Polaromonas naphthalenivorans (strain CJ2)).